The following is a 101-amino-acid chain: Urease subunit beta (101 aa).

The protein belongs to the urease beta subunit family. Heterotrimer of UreA (gamma), UreB (beta) and UreC (alpha) subunits. Three heterotrimers associate to form the active enzyme.

Its subcellular location is the cytoplasm. It carries out the reaction urea + 2 H2O + H(+) = hydrogencarbonate + 2 NH4(+). It functions in the pathway nitrogen metabolism; urea degradation; CO(2) and NH(3) from urea (urease route): step 1/1. In Paraburkholderia xenovorans (strain LB400), this protein is Urease subunit beta.